We begin with the raw amino-acid sequence, 187 residues long: MTTEPKDPVADLAPEPAVPSLVDRYFTRWYKADVKGKPCEDHCILQHSNRICVITLAGSHPVLQSGKTIKSISYQISTNCSRLQNKVSGKFKRGAQFLTELAPLCKIYCSDGEEYTISSCVRGRLMEVNENILHKPSILQEKPSTEGYIAVVLPKFEESKSITEGLLTQKEYEEVVVKRLRATTAAS.

This sequence belongs to the ABITRAM family. As to quaternary structure, interacts with F-actin. Interacts with G-actin.

The protein resides in the nucleus speckle. It localises to the cell projection. The protein localises to the lamellipodium. It is found in the nucleus. Its subcellular location is the growth cone. The protein resides in the dendrite. In terms of biological role, actin-binding protein that regulates actin polymerization, filopodia dynamics and increases the branching of proximal dendrites of developing neurons. May play a role in transcription regulation. This Bos taurus (Bovine) protein is Protein Abitram (ABITRAM).